We begin with the raw amino-acid sequence, 427 residues long: Isoprenylcysteine alpha-carbonyl methylesterase ICME (427 aa).

The segment at 26–59 is disordered; sequence EVLPDEDSDRTTLLNGEPLRRRVSGKSPVDEGPR. A run of 2 helical transmembrane segments spans residues 102-122 and 157-177; these read LLALTCYAMLLMPGFLQVAYS and VVVFVTGGAWIIGYKAWGSLL. Substrate-binding positions include 163–165 and 234–236; these read GGA and QSA. Catalysis depends on residues S235, D336, and H368.

The protein belongs to the AB hydrolase superfamily. Isoprenylcysteine methylesterase family. Expressed in roots, rosette and cauline leaves, stems, flowers and siliques.

The protein resides in the endoplasmic reticulum membrane. It is found in the golgi apparatus membrane. It carries out the reaction [protein]-C-terminal S-[(2E,6E)-farnesyl]-L-cysteine methyl ester + H2O = [protein]-C-terminal S-[(2E,6E)-farnesyl]-L-cysteine + methanol + H(+). In terms of biological role, catalyzes the demethylation of isoprenylcysteine methylesters. In vitro, is specific for N-acetyl-S-farnesyl-L-cysteine methyl ester (AFCme) and has low activity toward N-acetyl-S-geranyl-L-cysteine methyl ester (AGCme). Acts as a positive regulator of ABA signaling. May be involved in the demethylation and inactivation of isoprenylated negative regulators of abscisic acid (ABA) signaling. Carboxyl methylation is a reversible and potentially regulated step in the post-translational modification of prenylated proteins. The sequence is that of Isoprenylcysteine alpha-carbonyl methylesterase ICME from Arabidopsis thaliana (Mouse-ear cress).